The chain runs to 195 residues: Thymidylate kinase (195 aa).

Glycine 7–threonine 14 contacts ATP.

This sequence belongs to the thymidylate kinase family.

The catalysed reaction is dTMP + ATP = dTDP + ADP. Phosphorylation of dTMP to form dTDP in both de novo and salvage pathways of dTTP synthesis. In Aquifex aeolicus (strain VF5), this protein is Thymidylate kinase (tmk).